The following is a 121-amino-acid chain: Large ribosomal subunit protein uL18 (121 aa).

The protein belongs to the universal ribosomal protein uL18 family. Part of the 50S ribosomal subunit; part of the 5S rRNA/L5/L18/L25 subcomplex. Contacts the 5S and 23S rRNAs.

Functionally, this is one of the proteins that bind and probably mediate the attachment of the 5S RNA into the large ribosomal subunit, where it forms part of the central protuberance. The polypeptide is Large ribosomal subunit protein uL18 (Polaromonas naphthalenivorans (strain CJ2)).